The primary structure comprises 132 residues: uncharacterized protein (132 aa).

This is an uncharacterized protein from Sinorhizobium fredii (strain NBRC 101917 / NGR234).